The primary structure comprises 720 residues: Inactive serine protease PAMR1 (720 aa).

An N-terminal signal peptide occupies residues 1–21; sequence MELGWWPQLGLAFLQLLLISS. Disulfide bonds link cysteine 128–cysteine 150, cysteine 177–cysteine 199, cysteine 239–cysteine 250, cysteine 244–cysteine 260, cysteine 262–cysteine 271, cysteine 280–cysteine 329, cysteine 315–cysteine 342, and cysteine 414–cysteine 442. The CUB domain occupies 128-236; the sequence is CGQVLRVPKG…DGFHAIFEEI (109 aa). The EGF-like domain occupies 235–272; that stretch reads EITACSSSPCFHDGTCLLDSTGSYKCACLAGYTGKHCE. 2 consecutive Sushi domains span residues 278 to 344 and 387 to 444; these read RNCS…ICIK and APTK…SCIP. The Peptidase S1 domain occupies 445 to 720; the sequence is ICGKTENVSA…FKDWIERNMK (276 aa). Residue asparagine 451 is glycosylated (N-linked (GlcNAc...) asparagine). 3 disulfide bridges follow: cysteine 489-cysteine 505, cysteine 630-cysteine 649, and cysteine 661-cysteine 697.

The protein belongs to the peptidase S1 family.

It is found in the secreted. Functionally, may play a role in regeneration of skeletal muscle. This is Inactive serine protease PAMR1 (PAMR1) from Bos taurus (Bovine).